The following is a 154-amino-acid chain: 3-hydroxyacyl-[acyl-carrier-protein] dehydratase FabZ (154 aa).

H54 is an active-site residue.

It belongs to the thioester dehydratase family. FabZ subfamily.

The protein resides in the cytoplasm. The catalysed reaction is a (3R)-hydroxyacyl-[ACP] = a (2E)-enoyl-[ACP] + H2O. Its function is as follows. Involved in unsaturated fatty acids biosynthesis. Catalyzes the dehydration of short chain beta-hydroxyacyl-ACPs and long chain saturated and unsaturated beta-hydroxyacyl-ACPs. The protein is 3-hydroxyacyl-[acyl-carrier-protein] dehydratase FabZ of Shewanella putrefaciens (strain CN-32 / ATCC BAA-453).